The following is a 517-amino-acid chain: Nectin-1 (517 aa).

A signal peptide spans 1 to 30 (MARMGLAGAAGRWWGLALGLTAFFLPGVHS). Residues 31-141 (QVVQVNDSMY…GNRESQLNLT (111 aa)) enclose the Ig-like V-type domain. At 31–355 (QVVQVNDSMY…GRRAGPVPTA (325 aa)) the chain is on the extracellular side. 3 N-linked (GlcNAc...) asparagine glycosylation sites follow: N36, N72, and N139. C51 and C124 are joined by a disulfide. Ig-like C2-type domains lie at 149–238 (WIEG…FKES) and 247–334 (PEVT…VNIT). Intrachain disulfides connect C172/C226 and C269/C316. N202 is a glycosylation site (N-linked (GlcNAc...) (complex) asparagine). Residues 282–299 (WTTLNGSLPKGVEAQNRT) form an interaction with FGFR region. Residues N286, N297, N307, and N332 are each glycosylated (N-linked (GlcNAc...) asparagine). A helical membrane pass occupies residues 356-376 (IIGGVAGSILLVLIVVGGIVV). Residues 377 to 517 (ALRRRRHTFK…SFISKKEWYV (141 aa)) lie on the Cytoplasmic side of the membrane. Positions 399–488 (GYSKAGIPQH…DGYGDRTLGY (90 aa)) are disordered. Phosphoserine occurs at positions 422, 434, and 435. Y436 carries the phosphotyrosine modification. Positions 436 to 445 (YEEEEEEEEG) are enriched in acidic residues. Residues 449–466 (GERKVGGPHPKYDEDAKR) show a composition bias toward basic and acidic residues. S511 carries the phosphoserine modification.

It belongs to the nectin family. As to quaternary structure, cis- and trans-homodimer. Can form trans-heterodimers with NECTIN3 and with NECTIN4. Interaction between NECTIN1 and NECTIN3 on the pre- and postsynaptic sites, respectively, initiates the formation of puncta adherentia junctions between axons and dendrites. Interacts (via cytoplasmic domain) with AFDN (via PDZ domain); this interaction recruits NECTIN1 to cadherin-based adherens junctions and provides a connection with the actin cytoskeleton. Interacts with integrin alphaV/beta3. Interacts (via Ig-like C2-type domain 2) with FGFR1, FGFR2 and FGFR3. (Microbial infection) Interacts with herpes simplex virus 1/HHV-1, herpes simplex virus 2/HHV-2, and pseudorabies virus/PRV envelope glycoprotein D. Post-translationally, (Microbial infection) Ubiquitinated by CBL following infection by herpes simplex virus 1/HHV-1 and association with HHV-1 envelope glycoprotein D, leading to its removal from cell surface.

It localises to the cell membrane. The protein localises to the cell junction. It is found in the adherens junction. The protein resides in the presynaptic cell membrane. Its subcellular location is the secreted. Cell adhesion molecule that promotes cell-cell contacts and plays important roles in the development of the nervous system. Acts by forming homophilic or heterophilic trans-dimers. Heterophilic interactions have been detected between NECTIN1 and NECTIN3 and between NECTIN1 and NECTIN4. Involved in axon guidance by promoting contacts between the commissural axons and the floor plate cells. Involved in synaptogegesis. Has some neurite outgrowth-promoting activity. Promotes formation of checkerboard-like cellular pattern of hair cells and supporting cells in the auditory epithelium via heterophilic interaction with NECTIN3: NECTIN1 is present in the membrane of hair cells and associates with NECTIN3 on supporting cells, thereby mediating heterotypic adhesion between these two cell types. Required for enamel mineralization. Functionally, (Microbial infection) Acts as a receptor for herpes simplex virus 1/HHV-1, herpes simplex virus 2/HHV-2, and pseudorabies virus/PRV. Constitutes the major receptor for herpes simplex virus 1/HHV-1 entry into host cells. This chain is Nectin-1, found in Homo sapiens (Human).